The chain runs to 278 residues: Energy-coupling factor transporter ATP-binding protein EcfA1 (278 aa).

One can recognise an ABC transporter domain in the interval 5–239; sequence LLLESVSYQY…QDKLEAAGID (235 aa). 39–46 is an ATP binding site; the sequence is GPNGSGKS.

Belongs to the ABC transporter superfamily. Energy-coupling factor EcfA family. Forms a stable energy-coupling factor (ECF) transporter complex composed of 2 membrane-embedded substrate-binding proteins (S component), 2 ATP-binding proteins (A component) and 2 transmembrane proteins (T component).

It is found in the cell membrane. In terms of biological role, ATP-binding (A) component of a common energy-coupling factor (ECF) ABC-transporter complex. Unlike classic ABC transporters this ECF transporter provides the energy necessary to transport a number of different substrates. This Halalkalibacterium halodurans (strain ATCC BAA-125 / DSM 18197 / FERM 7344 / JCM 9153 / C-125) (Bacillus halodurans) protein is Energy-coupling factor transporter ATP-binding protein EcfA1.